A 207-amino-acid polypeptide reads, in one-letter code: Protein DMP1 (207 aa).

A disordered region spans residues 1-20 (MSETSLLIPKTNSPASSENM). Helical transmembrane passes span 33–53 (LIKL…PVLT), 64–84 (VMSS…CFTD), 121–141 (IADF…VLLD), and 159–179 (LVMA…ALFP).

Belongs to the plant DMP1 protein family. In terms of tissue distribution, expressed in leaves, siliques and roots.

The protein localises to the endoplasmic reticulum membrane. Its subcellular location is the vacuole membrane. Functionally, involved in membrane remodeling including fission during breakdown of the endoplasmic reticulum (ER) and the tonoplast during leaf senescence and in membrane fusion during vacuole biogenesis in roots. This is Protein DMP1 from Arabidopsis thaliana (Mouse-ear cress).